A 451-amino-acid chain; its full sequence is Phosphoglucosamine mutase (451 aa).

Residue Ser-101 is the Phosphoserine intermediate of the active site. Mg(2+)-binding residues include Ser-101, Asp-240, Asp-242, and Asp-244. At Ser-101 the chain carries Phosphoserine.

The protein belongs to the phosphohexose mutase family. Mg(2+) serves as cofactor. Post-translationally, activated by phosphorylation.

It carries out the reaction alpha-D-glucosamine 1-phosphate = D-glucosamine 6-phosphate. Catalyzes the conversion of glucosamine-6-phosphate to glucosamine-1-phosphate. The protein is Phosphoglucosamine mutase of Thioalkalivibrio sulfidiphilus (strain HL-EbGR7).